Consider the following 50-residue polypeptide: Penaeidin-1 (50 aa).

3 disulfide bridges follow: cysteine 25–cysteine 38, cysteine 27–cysteine 45, and cysteine 39–cysteine 46.

As to expression, higher expression in hemocytes and to a lesser extent in heart, testis, gills, intestine, lymphoid organ and hepatopancreas. Traces in eyes and subcuticular epithelium. Not present in the brain.

The protein localises to the cytoplasmic granule. In terms of biological role, antibacterial activity against M.luteus and E.coli bacteria. Antifungal activity against N.crassa and F.oxysporum. Presents chitin-binding activity. The sequence is that of Penaeidin-1 from Penaeus vannamei (Whiteleg shrimp).